The sequence spans 950 residues: Protocadherin alpha-1 (950 aa).

Positions 1-29 are cleaved as a signal peptide; the sequence is MVFSRRGGLGARDLLLWLLLLAAWEVGSG. Cadherin domains follow at residues 30–133, 157–242, 243–350, 351–455, 456–565, and 588–678; these read QLHY…PPVF, AADA…APLF, DQAV…APEL, AVTS…APAF, AQPE…APAL, and GHVV…APKA. The Extracellular portion of the chain corresponds to 30–697; that stretch reads QLHYSIPEEA…GPEAALVDVN (668 aa). N-linked (GlcNAc...) asparagine glycosylation is found at N257 and N265. Residue N548 is glycosylated (N-linked (GlcNAc...) asparagine). The helical transmembrane segment at 698–718 threads the bilayer; the sequence is VYLIIAICAVSSLLVLTLLLY. Topologically, residues 719-950 are cytoplasmic; it reads TALRCSVPPT…GNSTTDNSDQ (232 aa). PXXP repeat units lie at residues 734–737, 799–802, 832–835, 873–876, and 891–894; these read PGKP, PRQP, PGGP, PGNP, and PGSP. Residues 734 to 894 form a 5 X 4 AA repeats of P-X-X-P region; the sequence is PGKPTLVCSS…PDKFIIPGSP (161 aa). 3 disordered regions span residues 752–808, 828–856, and 871–890; these read QQRR…DWRY, LRAGPGGPDQQWPTVSSATPEPEAGEVSP, and YGPGNPKQSGPGELPDKFII. Residues 900 to 950 are disordered; the sequence is RQEPTNSQIDKSDFITFGKKEETKKKKKKKKGNKTQEKKEKGNSTTDNSDQ. Residues 909–923 are compositionally biased toward basic and acidic residues; that stretch reads DKSDFITFGKKEETK.

It is found in the cell membrane. It localises to the secreted. In terms of biological role, potential calcium-dependent cell-adhesion protein. May be involved in the establishment and maintenance of specific neuronal connections in the brain. The sequence is that of Protocadherin alpha-1 (PCDHA1) from Homo sapiens (Human).